The following is a 310-amino-acid chain: L-lactate dehydrogenase (310 aa).

NAD(+) contacts are provided by residues valine 11, aspartate 32, tyrosine 62, and glycine 76–valine 77. Residues glutamine 79, arginine 85, and asparagine 117 to aspartate 120 each bind substrate. Residues alanine 115–asparagine 117 and serine 140 each bind NAD(+). Position 145 to 148 (aspartate 145 to arginine 148) interacts with substrate. Residues arginine 150 and histidine 165 each contribute to the beta-D-fructose 1,6-bisphosphate site. The active-site Proton acceptor is histidine 172. Tyrosine 218 bears the Phosphotyrosine mark. Threonine 227 serves as a coordination point for substrate.

The protein belongs to the LDH/MDH superfamily. LDH family. Homotetramer.

The protein resides in the cytoplasm. The enzyme catalyses (S)-lactate + NAD(+) = pyruvate + NADH + H(+). Its pathway is fermentation; pyruvate fermentation to lactate; (S)-lactate from pyruvate: step 1/1. Activated by citrate at pH 5. Allosterically activated by fructose 1,6-bisphosphate (FBP) at pH from 5.8 to 7.2. In terms of biological role, catalyzes the conversion of lactate to pyruvate. The chain is L-lactate dehydrogenase from Thermus aquaticus.